A 536-amino-acid polypeptide reads, in one-letter code: Chaperonin GroEL (536 aa).

ATP is bound by residues 30-33, 86-90, Gly414, and Asp494; these read TLGP and DGTTT.

It belongs to the chaperonin (HSP60) family. As to quaternary structure, forms a cylinder of 14 subunits composed of two heptameric rings stacked back-to-back. Interacts with the co-chaperonin GroES.

It localises to the cytoplasm. The catalysed reaction is ATP + H2O + a folded polypeptide = ADP + phosphate + an unfolded polypeptide.. Its function is as follows. Together with its co-chaperonin GroES, plays an essential role in assisting protein folding. The GroEL-GroES system forms a nano-cage that allows encapsulation of the non-native substrate proteins and provides a physical environment optimized to promote and accelerate protein folding. This is Chaperonin GroEL from Methanosarcina barkeri (strain Fusaro / DSM 804).